The chain runs to 180 residues: Large ribosomal subunit protein uL6 (180 aa).

Belongs to the universal ribosomal protein uL6 family. Part of the 50S ribosomal subunit.

This protein binds to the 23S rRNA, and is important in its secondary structure. It is located near the subunit interface in the base of the L7/L12 stalk, and near the tRNA binding site of the peptidyltransferase center. In Clostridium botulinum (strain ATCC 19397 / Type A), this protein is Large ribosomal subunit protein uL6.